A 454-amino-acid polypeptide reads, in one-letter code: uncharacterized protein (454 aa).

The N-terminal stretch at 1–18 is a signal peptide; it reads MRRFTLFVFFLSISIAYA.

This is an uncharacterized protein from Caenorhabditis elegans.